The sequence spans 197 residues: Large ribosomal subunit protein uL13C (197 aa).

It belongs to the universal ribosomal protein uL13 family. As to quaternary structure, component of the large ribosomal subunit (LSU). Mature yeast ribosomes consist of a small (40S) and a large (60S) subunit. The 40S small subunit contains 1 molecule of ribosomal RNA (18S rRNA) and at least 33 different proteins. The large 60S subunit contains 3 rRNA molecules (25S, 5.8S and 5S rRNA) and at least 46 different proteins.

It is found in the cytoplasm. The protein resides in the nucleus. The protein localises to the nucleolus. Component of the ribosome, a large ribonucleoprotein complex responsible for the synthesis of proteins in the cell. The small ribosomal subunit (SSU) binds messenger RNAs (mRNAs) and translates the encoded message by selecting cognate aminoacyl-transfer RNA (tRNA) molecules. The large subunit (LSU) contains the ribosomal catalytic site termed the peptidyl transferase center (PTC), which catalyzes the formation of peptide bonds, thereby polymerizing the amino acids delivered by tRNAs into a polypeptide chain. The nascent polypeptides leave the ribosome through a tunnel in the LSU and interact with protein factors that function in enzymatic processing, targeting, and the membrane insertion of nascent chains at the exit of the ribosomal tunnel. The protein is Large ribosomal subunit protein uL13C (rpl1603) of Schizosaccharomyces pombe (strain 972 / ATCC 24843) (Fission yeast).